The chain runs to 285 residues: Purine biosynthesis transcriptional repressor PurR (285 aa).

A DNA binding domain region spans residues 1–73 (MKFRRSGRLV…GAAGGVKYIP (73 aa)). Residues 74–285 (KMKQAEAEEF…NLLKNGETES (212 aa)) are effector binding domain. Tyr-102 is a binding site for guanosine 3',5'-bis(diphosphate). Residues Ala-138, Thr-139, Lys-140, and Arg-160 each coordinate 5-phospho-alpha-D-ribose 1-diphosphate. The guanosine 3',5'-bis(diphosphate) site is built by Gly-178 and Ser-179. Positions 203, 204, 205, 207, and 208 each coordinate 5-phospho-alpha-D-ribose 1-diphosphate. Lys-207 is a guanosine 3',5'-bis(diphosphate) binding site. Guanosine 3',5'-bis(diphosphate) contacts are provided by Gly-209, Gly-210, and Thr-211. Position 211 (Thr-211) interacts with 5-phospho-alpha-D-ribose 1-diphosphate.

Belongs to the purine/pyrimidine phosphoribosyltransferase family. PurR subfamily. As to quaternary structure, homodimer.

The binding of PurR to DNA, and therefore the repressor activity, is influenced by interaction with the effector molecules 5-phosphoribosyl 1-pyrophosphate (PRPP) and (p)ppGpp. PRPP binds to PurR and reduces affinity of PurR for DNA, which inhibits the repressor activity and induces transcription of the target genes. On the contrary, (p)ppGpp enhances binding of PurR to DNA and repression of the transcription. PRPP and (p)ppGpp compete for PurR binding and allosteric control of transcription. ppGpp maintains PurR-DNA interaction and prevents PRPP from de-repressing PurR regulation during conditions that lead to (p)ppGpp induction, such as upon amino acid starvation. Functionally, DNA-binding transcriptional repressor that controls the expression of a number of genes involved in the synthesis, metabolism and transport of purines. In response to a signal of excess adenine, represses the transcription of the pur operon, which encodes enzymes of the purine biosynthetic pathway. It also represses the expression of the purA and purR genes. In addition, controls the expression of several other genes or operons, which encode enzymes or transporters playing a role in purine nucleotide metabolism. Acts by binding directly to specific DNA sequences, named PurBoxes, in the upstream control regions of affected genes. Two PurBoxes are required for high-affinity PurR binding. Also responds to amino acid starvation via (p)ppGpp, which strongly increases PurR activity and repression of purine nucleotide biosynthesis genes. In Bacillus subtilis (strain 168), this protein is Purine biosynthesis transcriptional repressor PurR.